We begin with the raw amino-acid sequence, 595 residues long: Prolycopene isomerase, chloroplastic (595 aa).

A chloroplast-targeting transit peptide spans 1–56 (MDLCFQNPVKCGDRLFSALNTSTYYKLGTSNLGFNGPVLENRKKKKKLPRMVTVKS). Position 57 is an N-acetylvaline (Val57).

It belongs to the carotenoid/retinoid oxidoreductase family. CrtISO subfamily. It depends on NAD(+) as a cofactor. NADP(+) is required as a cofactor. The cofactor is FAD.

Its subcellular location is the plastid. The protein localises to the chloroplast membrane. It carries out the reaction 7,7',9,9'-tetra-cis-lycopene = all-trans-lycopene. It functions in the pathway carotenoid biosynthesis; lycopene biosynthesis. In terms of biological role, carotene cis-trans-isomerase that converts 7,9,9'-tri-cis-neurosporene to 9'-cis-neurosporene and 7,9,9',7'-tetra-cis-lycopene (also known as prolycopene) into all-trans-lycopene. Isomerization requires redox-active components, suggesting that isomerization is achieved by a reversible redox reaction acting at specific double bonds. Isomerizes adjacent cis-double bonds at C7 and C9 pairwise into the trans-configuration, but is incapable of isomerizing single cis-double bonds at C9 and C9'. Carotenoid biosynthesis is partly required to form the prolamellar bodies of etioplasts. The chain is Prolycopene isomerase, chloroplastic (CRTISO) from Arabidopsis thaliana (Mouse-ear cress).